The chain runs to 61 residues: MAKKSMIAKQKRPQKFKVQEYTRCERCGRPHSVIRKFKLCRICFRELAYKGQIPGVKKASW.

Zn(2+) contacts are provided by C24, C27, C40, and C43.

It belongs to the universal ribosomal protein uS14 family. Zinc-binding uS14 subfamily. In terms of assembly, part of the 30S ribosomal subunit. Contacts proteins S3 and S10. Zn(2+) is required as a cofactor.

In terms of biological role, binds 16S rRNA, required for the assembly of 30S particles and may also be responsible for determining the conformation of the 16S rRNA at the A site. This is Small ribosomal subunit protein uS14B from Oceanobacillus iheyensis (strain DSM 14371 / CIP 107618 / JCM 11309 / KCTC 3954 / HTE831).